The chain runs to 202 residues: Dephospho-CoA kinase (202 aa).

One can recognise a DPCK domain in the interval 4–201; sequence VIGLTGGIAS…QKYLAMSKQN (198 aa). 12-17 lines the ATP pocket; the sequence is ASGKTT.

This sequence belongs to the CoaE family.

The protein resides in the cytoplasm. It carries out the reaction 3'-dephospho-CoA + ATP = ADP + CoA + H(+). It participates in cofactor biosynthesis; coenzyme A biosynthesis; CoA from (R)-pantothenate: step 5/5. In terms of biological role, catalyzes the phosphorylation of the 3'-hydroxyl group of dephosphocoenzyme A to form coenzyme A. The protein is Dephospho-CoA kinase of Vibrio vulnificus (strain YJ016).